Consider the following 320-residue polypeptide: Aspartate carbamoyltransferase catalytic subunit (320 aa).

Carbamoyl phosphate contacts are provided by R70 and T71. K98 provides a ligand contact to L-aspartate. Positions 120, 149, and 152 each coordinate carbamoyl phosphate. L-aspartate-binding residues include R182 and R237. Carbamoyl phosphate contacts are provided by G278 and P279.

This sequence belongs to the aspartate/ornithine carbamoyltransferase superfamily. ATCase family. As to quaternary structure, heterododecamer (2C3:3R2) of six catalytic PyrB chains organized as two trimers (C3), and six regulatory PyrI chains organized as three dimers (R2).

It carries out the reaction carbamoyl phosphate + L-aspartate = N-carbamoyl-L-aspartate + phosphate + H(+). It functions in the pathway pyrimidine metabolism; UMP biosynthesis via de novo pathway; (S)-dihydroorotate from bicarbonate: step 2/3. Its function is as follows. Catalyzes the condensation of carbamoyl phosphate and aspartate to form carbamoyl aspartate and inorganic phosphate, the committed step in the de novo pyrimidine nucleotide biosynthesis pathway. In Vesicomyosocius okutanii subsp. Calyptogena okutanii (strain HA), this protein is Aspartate carbamoyltransferase catalytic subunit.